We begin with the raw amino-acid sequence, 837 residues long: Protein translocase subunit SecA 1 (837 aa).

ATP is bound by residues Gln-85, 103 to 107 (GEGKT), and Asp-492. Over residues 787–806 (QEVAKGEAVHPKEDGEEPKR) the composition is skewed to basic and acidic residues. The segment at 787-811 (QEVAKGEAVHPKEDGEEPKRKPVRK) is disordered. Zn(2+) is bound by residues Cys-821, Cys-823, Cys-832, and Cys-833.

The protein belongs to the SecA family. In terms of assembly, monomer and homodimer. Part of the essential Sec protein translocation apparatus which comprises SecA, SecYEG and auxiliary proteins SecDF. Other proteins may also be involved. The cofactor is Zn(2+).

It is found in the cell membrane. The protein resides in the cytoplasm. The catalysed reaction is ATP + H2O + cellular proteinSide 1 = ADP + phosphate + cellular proteinSide 2.. Functionally, part of the Sec protein translocase complex. Interacts with the SecYEG preprotein conducting channel. Has a central role in coupling the hydrolysis of ATP to the transfer of proteins into and across the cell membrane, serving as an ATP-driven molecular motor driving the stepwise translocation of polypeptide chains across the membrane. The chain is Protein translocase subunit SecA 1 from Geobacillus kaustophilus (strain HTA426).